A 288-amino-acid polypeptide reads, in one-letter code: Phosphatidylserine decarboxylase proenzyme (288 aa).

Residues Asp91, His148, and Ser254 each act as charge relay system; for autoendoproteolytic cleavage activity in the active site. Ser254 functions as the Schiff-base intermediate with substrate; via pyruvic acid; for decarboxylase activity in the catalytic mechanism. Position 254 is a pyruvic acid (Ser); by autocatalysis (Ser254).

Belongs to the phosphatidylserine decarboxylase family. PSD-B subfamily. Prokaryotic type I sub-subfamily. In terms of assembly, heterodimer of a large membrane-associated beta subunit and a small pyruvoyl-containing alpha subunit. Requires pyruvate as cofactor. Post-translationally, is synthesized initially as an inactive proenzyme. Formation of the active enzyme involves a self-maturation process in which the active site pyruvoyl group is generated from an internal serine residue via an autocatalytic post-translational modification. Two non-identical subunits are generated from the proenzyme in this reaction, and the pyruvate is formed at the N-terminus of the alpha chain, which is derived from the carboxyl end of the proenzyme. The autoendoproteolytic cleavage occurs by a canonical serine protease mechanism, in which the side chain hydroxyl group of the serine supplies its oxygen atom to form the C-terminus of the beta chain, while the remainder of the serine residue undergoes an oxidative deamination to produce ammonia and the pyruvoyl prosthetic group on the alpha chain. During this reaction, the Ser that is part of the protease active site of the proenzyme becomes the pyruvoyl prosthetic group, which constitutes an essential element of the active site of the mature decarboxylase.

Its subcellular location is the cell membrane. It carries out the reaction a 1,2-diacyl-sn-glycero-3-phospho-L-serine + H(+) = a 1,2-diacyl-sn-glycero-3-phosphoethanolamine + CO2. The protein operates within phospholipid metabolism; phosphatidylethanolamine biosynthesis; phosphatidylethanolamine from CDP-diacylglycerol: step 2/2. In terms of biological role, catalyzes the formation of phosphatidylethanolamine (PtdEtn) from phosphatidylserine (PtdSer). The polypeptide is Phosphatidylserine decarboxylase proenzyme (Pseudoalteromonas translucida (strain TAC 125)).